Reading from the N-terminus, the 346-residue chain is GTPase Obg (346 aa).

One can recognise an Obg domain in the interval 1–159 (MKFLDEAKVY…RWIWLRLKLI (159 aa)). Residues 160-327 (ADAGLVGLPN…ALRALVAVIG (168 aa)) enclose the OBG-type G domain. GTP-binding positions include 166–173 (GLPNAGKS), 191–195 (FTTLH), 212–215 (DIPG), 279–282 (NKID), and 308–310 (SAA). Residues S173 and T193 each coordinate Mg(2+).

It belongs to the TRAFAC class OBG-HflX-like GTPase superfamily. OBG GTPase family. Monomer. The cofactor is Mg(2+).

The protein localises to the cytoplasm. In terms of biological role, an essential GTPase which binds GTP, GDP and possibly (p)ppGpp with moderate affinity, with high nucleotide exchange rates and a fairly low GTP hydrolysis rate. Plays a role in control of the cell cycle, stress response, ribosome biogenesis and in those bacteria that undergo differentiation, in morphogenesis control. This chain is GTPase Obg, found in Bradyrhizobium diazoefficiens (strain JCM 10833 / BCRC 13528 / IAM 13628 / NBRC 14792 / USDA 110).